The primary structure comprises 239 residues: Small ribosomal subunit protein uS2 (239 aa).

It belongs to the universal ribosomal protein uS2 family.

This is Small ribosomal subunit protein uS2 from Histophilus somni (strain 129Pt) (Haemophilus somnus).